The sequence spans 267 residues: Stomatin-3 (267 aa).

Residues 17 to 37 traverse the membrane as a helical segment; it reads FVALICAWAFLLLTFPVSIFF.

It belongs to the band 7/mec-2 family.

It is found in the membrane. The sequence is that of Stomatin-3 (sto-3) from Caenorhabditis elegans.